The following is a 121-amino-acid chain: UPF0738 protein BPUM_1088 (121 aa).

This sequence belongs to the UPF0738 family.

This is UPF0738 protein BPUM_1088 from Bacillus pumilus (strain SAFR-032).